A 501-amino-acid polypeptide reads, in one-letter code: MTKILLNTASTVLTRLWKLSLLGLVFAVAAATLVSSRIPTTLEEVKSSGKLIVISRNGPTTYYEGPAGHTGFEYVMAKAFAKHLGVDLEVREIEDLGEMLDKVGTKAGHLAASGLTVTEKRARKVLFAEPYLQVTQQLIYRSGESKPETIEDLYGKRVMVISNSSHSERLKELQREYRDLAWEEQHDVDMLDLLEMVHNGKIDYTIVDSNAYQINRPVYPKATVAFDISEPQDLAWAFPQQKDASLYNEAQKFFKDIKQTGAIDDAMETFYGHLGEIDYSGAILFAHRLQSRLPKWETHLKAAAEKNDLDWQLLAALSYQESHWNPKAKSPTGVRGFMMLTLNTAKEVGVKNRLNAEQSIYGGARYFKSLHGRLPERIKEPDRTWLALAAYNIGLGHLEDARILTEHFGGNPDKWADVKQQLPLLAKRKYYKFTKHGYARGWEAVDYVQNIRNFHTIIAWNEIENQRLQQLAQNENHVSDYAQFSPTVTEAVKSISGTSSL.

The N-terminal stretch at 1 to 29 (MTKILLNTASTVLTRLWKLSLLGLVFAVA) is a signal peptide. The segment at 30-274 (AATLVSSRIP…DAMETFYGHL (245 aa)) is non-LT domain. Positions 275–501 (GEIDYSGAIL…VKSISGTSSL (227 aa)) are LT domain. Glutamate 321 is an active-site residue.

It in the N-terminal section; belongs to the bacterial solute-binding protein 3 family. The protein in the C-terminal section; belongs to the transglycosylase Slt family.

The protein localises to the cell outer membrane. The enzyme catalyses Exolytic cleavage of the (1-&gt;4)-beta-glycosidic linkage between N-acetylmuramic acid (MurNAc) and N-acetylglucosamine (GlcNAc) residues in peptidoglycan, from either the reducing or the non-reducing ends of the peptidoglycan chains, with concomitant formation of a 1,6-anhydrobond in the MurNAc residue.. In terms of biological role, murein-degrading enzyme that degrades murein glycan strands and insoluble, high-molecular weight murein sacculi, with the concomitant formation of a 1,6-anhydromuramoyl product. Lytic transglycosylases (LTs) play an integral role in the metabolism of the peptidoglycan (PG) sacculus. Their lytic action creates space within the PG sacculus to allow for its expansion as well as for the insertion of various structures such as secretion systems and flagella. In Saccharophagus degradans (strain 2-40 / ATCC 43961 / DSM 17024), this protein is Membrane-bound lytic murein transglycosylase F.